A 481-amino-acid polypeptide reads, in one-letter code: Tryptophan biosynthesis protein TrpCF (481 aa).

Residues 1-283 (MKMTDFNTQQ…LAVRKVTLGE (283 aa)) are indole-3-glycerol phosphate synthase. The N-(5'-phosphoribosyl)anthranilate isomerase stretch occupies residues 284–481 (NKVCGLTHPD…QAAFHAIRNY (198 aa)).

In the N-terminal section; belongs to the TrpC family. This sequence in the C-terminal section; belongs to the TrpF family. In terms of assembly, monomer.

The catalysed reaction is N-(5-phospho-beta-D-ribosyl)anthranilate = 1-(2-carboxyphenylamino)-1-deoxy-D-ribulose 5-phosphate. It carries out the reaction 1-(2-carboxyphenylamino)-1-deoxy-D-ribulose 5-phosphate + H(+) = (1S,2R)-1-C-(indol-3-yl)glycerol 3-phosphate + CO2 + H2O. It functions in the pathway amino-acid biosynthesis; L-tryptophan biosynthesis; L-tryptophan from chorismate: step 3/5. It participates in amino-acid biosynthesis; L-tryptophan biosynthesis; L-tryptophan from chorismate: step 4/5. Functionally, bifunctional enzyme that catalyzes two sequential steps of tryptophan biosynthetic pathway. The first reaction is catalyzed by the isomerase, coded by the TrpF domain; the second reaction is catalyzed by the synthase, coded by the TrpC domain. The chain is Tryptophan biosynthesis protein TrpCF (trpC) from Vibrio parahaemolyticus serotype O3:K6 (strain RIMD 2210633).